The following is a 162-amino-acid chain: NADH-quinone oxidoreductase subunit I 2 (162 aa).

2 consecutive 4Fe-4S ferredoxin-type domains span residues 53-83 (LRRY…IDSE) and 93-122 (TRYD…ETRI). The [4Fe-4S] cluster site is built by C63, C66, C69, C73, C102, C105, C108, and C112.

This sequence belongs to the complex I 23 kDa subunit family. In terms of assembly, NDH-1 is composed of 14 different subunits. Subunits NuoA, H, J, K, L, M, N constitute the membrane sector of the complex. Requires [4Fe-4S] cluster as cofactor.

The protein localises to the cell inner membrane. It catalyses the reaction a quinone + NADH + 5 H(+)(in) = a quinol + NAD(+) + 4 H(+)(out). In terms of biological role, NDH-1 shuttles electrons from NADH, via FMN and iron-sulfur (Fe-S) centers, to quinones in the respiratory chain. The immediate electron acceptor for the enzyme in this species is believed to be ubiquinone. Couples the redox reaction to proton translocation (for every two electrons transferred, four hydrogen ions are translocated across the cytoplasmic membrane), and thus conserves the redox energy in a proton gradient. The protein is NADH-quinone oxidoreductase subunit I 2 of Nitrosococcus oceani (strain ATCC 19707 / BCRC 17464 / JCM 30415 / NCIMB 11848 / C-107).